Reading from the N-terminus, the 514-residue chain is Flagellin B (514 aa).

This sequence belongs to the bacterial flagellin family. As to quaternary structure, heteromer of FlaA and FlaB. FlaB is located proximal to the hook while the remainder of the filament is composed of the predominant FlaA.

The protein localises to the secreted. Its subcellular location is the bacterial flagellum. Functionally, flagellin is the subunit protein which polymerizes to form the filaments of bacterial flagella. Important for motility and virulence. The protein is Flagellin B (flaB) of Helicobacter pylori (strain ATCC 700392 / 26695) (Campylobacter pylori).